The primary structure comprises 1049 residues: MSTWSSMLADLRKQAEIAKQQAKKGIDVTKNGLQYGVSQVKLQALAAGKSIQKYGNKLVLVIPKDYDVNTGNGFFDLAKAAEELGIQVKYIDRNDLEIAHKSLGVTDQFLGLTERGLTLFAPQLDKFLQQHSKISNVVGSSTGDTVNKLAKSQAIISGVQSVLGSVLAGINLNEAIISGGSELELAKAGVDLASELVGNIAKGTATIEAFSEQIQNFGKLVQNAKGLGGVGQQLQHISGSALSKTGLGLDIISSLLSGVTASFTLADKNASTSTKVAAGFELSNQVIGGITKAVSSYILAQRLAAGLSTTGPAAALIASSISLAISPLSFLRVADNFNRSKDIREFAERFKKLGYEGDKLLSDFYHEAGTIDASITTISTALSAIAAGTAAASAGALVGAPITLLVTGITGLISGILEFSKQPMLEHVASKLGTKIEEWERKYGKNYFENGYDARHKAFLEDSLSLLSSFNKQYETERAVLITQQRWDEYIGELAGVTGKGDKISSGKAYVDYFEEGKLLAKKPDDFNRVILDPKKGKIDISNSQTSTLLKFVTPLLTPGTESRKRTQTGKYEYVTKLDVNGINQWEVNGVKEKGAVYDFTNLIQHVHISSSVARGEEYREVRLVSRLGKGNDKVFLASGSAEIHAGDGHDVVYYDKTDTGLLMVDGTQATKQGDYTVTRELSGATQILREVVKNQKSSVGSRQETVEYRDNELAQSGNSNLKAKDNLYSVEEIIGSNHRDEFKGSKFRDIFHGADGDDLLNGNDGDDILYGDKGNDELRGDNGNDQLYGGEGNDKLFGGNGNNYLSGGDGDDELQVLGNGFNVLRGGKGNDKLYGGAGSDFLDGGEGDDYLAGGEGNDFYVYRSTSGNHTIYDQGKSSDSDTLYLSDLTFDRLLVEKVDNNLVFKPSDHNSNRGSLTIKDWFKTGHGYNHKLEQIVDKNGRKLTSDNLETHFNGTPKTNLLGYTAENQNESNLSSLKTELGKIISSAGNFGLAKQGNNNHSAALNNDVDKLISSASSFATAQMGGSGIGLLPSNNANSTILSGLARTA.

The next 4 helical transmembrane spans lie at 246-266, 311-331, 375-395, and 397-417; these read GLGLDIISSLLSGVTASFTLA, GPAAALIASSISLAISPLSFL, ITTISTALSAIAAGTAAASAG, and LVGAPITLLVTGITGLISGIL. Hemolysin-type calcium-binding repeat units follow at residues 744-761, 762-779, 780-797, 798-815, 826-843, and 844-861; these read KGSKFRDIFHGADGDDLL, NGNDGDDILYGDKGNDEL, RGDNGNDQLYGGEGNDKL, FGGNGNNYLSGGDGDDEL, RGGKGNDKLYGGAGSDFL, and DGGEGDDYLAGGEGNDFY.

It belongs to the RTX prokaryotic toxin (TC 1.C.11) family.

Its subcellular location is the secreted. It localises to the host cell membrane. In terms of biological role, paxA is associated with abortion cases in swine and septicemia in young piglets. Shows cohemolytic activity with the sphingomyelinase of S.aureus but is devoid of direct hemolytic activity. The protein is Exotoxin PaxA (paxA) of Pasteurella aerogenes.